A 1827-amino-acid chain; its full sequence is Phenolphthiocerol/phthiocerol polyketide synthase subunit C (1827 aa).

The 427-residue stretch at 35–461 (CEPVAVVGIG…GTNAHVVVEQ (427 aa)) folds into the Ketosynthase family 3 (KS3) domain. Residues Cys-207, His-342, and His-383 each act as for beta-ketoacyl synthase activity in the active site. The tract at residues 566 to 876 (VFVYSGQGSQ…LAAVGVAASE (311 aa)) is acyltransferase. Ser-654 functions as the For malonyltransferase activity in the catalytic mechanism. Residues 910-1037 (HPLLGAHIEM…AKVEQSPREC (128 aa)) are N-terminal hotdog fold. Residues 910–1076 (HPLLGAHIEM…QHHGPAFAAL (167 aa)) are dehydratase. The PKS/mFAS DH domain maps to 910 to 1198 (HPLLGAHIEM…LRRVERRAVP (289 aa)). The Proton acceptor; for dehydratase activity role is filled by His-942. The tract at residues 1050–1198 (GTTVSPADFY…LRRVERRAVP (149 aa)) is C-terminal hotdog fold. The Proton donor; for dehydratase activity role is filled by Asp-1111. The beta-ketoacyl reductase stretch occupies residues 1439–1617 (ASYVVTGGLG…VINWGPWSEV (179 aa)). 1440 to 1485 (SYVVTGGLGGLGLVVARWLVDRGAGRVVLGGRSDPTDEQCNVLAEL) is an NADP(+) binding site. Residues 1706–1785 (RAVTERMCAR…DLTADLMRQL (80 aa)) enclose the Carrier domain. Ser-1745 carries the post-translational modification O-(pantetheine 4'-phosphoryl)serine. Positions 1807–1820 (RAAARHGAAMRRRP) are enriched in basic residues. The segment at 1807–1827 (RAAARHGAAMRRRPKPEVQGG) is disordered.

Requires NADP(+) as cofactor. Pantetheine 4'-phosphate is required as a cofactor.

The catalysed reaction is icosanoyl-[(phenol)carboxyphthiodiolenone synthase] + 2 (S)-methylmalonyl-CoA + 3 malonyl-CoA + 5 NADPH + 10 H(+) = C32-carboxyphthiodiolenone-[(phenol)carboxyphthiodiolenone synthase] + 5 CO2 + 5 NADP(+) + 5 CoA + 2 H2O. It catalyses the reaction docosanoyl-[(phenol)carboxyphthiodiolenone synthase] + 2 (S)-methylmalonyl-CoA + 3 malonyl-CoA + 5 NADPH + 10 H(+) = C34-carboxyphthiodiolenone-[(phenol)carboxyphthiodiolenone synthase] + 5 CO2 + 5 NADP(+) + 5 CoA + 2 H2O. The enzyme catalyses 17-(4-hydroxyphenyl)heptadecanoyl-[(phenol)carboxyphthiodiolenone synthase] + 2 (S)-methylmalonyl-CoA + 3 malonyl-CoA + 5 NADPH + 10 H(+) = C35-(phenol)carboxyphthiodiolenone-[(phenol)carboxyphthiodiolenone synthase] + 5 CO2 + 5 NADP(+) + 5 CoA + 2 H2O. It carries out the reaction 19-(4-hydroxyphenyl)nonadecanoyl-[(phenol)carboxyphthiodiolenone synthase] + 2 (S)-methylmalonyl-CoA + 3 malonyl-CoA + 5 NADPH + 10 H(+) = C37-(phenol)carboxyphthiodiolenone-[(phenol)carboxyphthiodiolenone synthase] + 5 CO2 + 5 NADP(+) + 5 CoA + 2 H2O. Its pathway is lipid metabolism; fatty acid biosynthesis. Functionally, part of the PpsABCDE complex involved in the biosynthesis of the lipid core common to phthiocerols and phenolphthiocerols by successive additions of malonyl-CoA or methylmalonyl-CoA extender units. PpsA can accept as substrate the activated forms of either icosanoyl (C20), docosanoyl (C22) or lignoceroyl (C24) groups from FadD26, or a (4-hydroxyphenyl)-C17 or (4-hydroxyphenyl)-C19 fatty acyl from FadD29. PpsA initiates the biosynthesis and extends its substrate using a malonyl-CoA extender unit. The PpsB and PpsC proteins add the second and third malonyl-CoA extender units. PpsD adds an (R)-methylmalonyl unit and PpsE adds a second (R)-methylmalonyl unit. The incorporation of the methylmalonyl units results in formation of two branched methyl groups in the elongated product. The chain is Phenolphthiocerol/phthiocerol polyketide synthase subunit C (ppsD) from Mycobacterium tuberculosis (strain CDC 1551 / Oshkosh).